Here is a 241-residue protein sequence, read N- to C-terminus: Platelet-derived growth factor subunit B (241 aa).

An N-terminal signal peptide occupies residues 1 to 20 (MNRCWALFLSLCCYLRLVSA). A propeptide spans 21-81 (EGDPIPEELY…ELESLARGRR (61 aa)) (removed in mature form). The N-linked (GlcNAc...) asparagine glycan is linked to Asn-63. Intrachain disulfides connect Cys-97/Cys-141, Cys-130/Cys-178, and Cys-134/Cys-180. The propeptide at 191–241 (RSPGGSQEQRAKTPQTRVTIRTVRVRRPPKGKHRKFKHTHDKTALKETLGA) is removed in mature form. Residues 216–230 (RRPPKGKHRKFKHTH) show a composition bias toward basic residues. Residues 216 to 241 (RRPPKGKHRKFKHTHDKTALKETLGA) are disordered.

This sequence belongs to the PDGF/VEGF growth factor family. As to quaternary structure, antiparallel homodimer; disulfide-linked. Antiparallel heterodimer with PDGFA; disulfide-linked. The PDGFB homodimer interacts with PDGFRA and PDGFRB homodimers, and with heterodimers formed by PDGFRA and PDGFRB. The heterodimer composed of PDGFA and PDGFB interacts with PDGFRB homodimers, and with heterodimers formed by PDGFRA and PDGFRB. Interacts with XLKD1. Interacts with LRP1. Interacts with SORL1 (via the N-terminal ectodomain). Interacts with CD82; this interaction inhibits PDGFB-mediated signaling pathway. In terms of tissue distribution, expressed at high levels in the heart, brain (sustantia nigra), placenta and fetal kidney. Expressed at moderate levels in the brain (hippocampus), skeletal muscle, kidney and lung.

Its subcellular location is the secreted. Growth factor that plays an essential role in the regulation of embryonic development, cell proliferation, cell migration, survival and chemotaxis. Potent mitogen for cells of mesenchymal origin. Required for normal proliferation and recruitment of pericytes and vascular smooth muscle cells in the central nervous system, skin, lung, heart and placenta. Required for normal blood vessel development, and for normal development of kidney glomeruli. Plays an important role in wound healing. Signaling is modulated by the formation of heterodimers with PDGFA. In Homo sapiens (Human), this protein is Platelet-derived growth factor subunit B (PDGFB).